The primary structure comprises 910 residues: NADH-quinone oxidoreductase subunit G (910 aa).

Residues 1 to 83 form the 2Fe-2S ferredoxin-type domain; that stretch reads MAKIYVDGKA…GTIISINDDT (83 aa). [2Fe-2S] cluster-binding residues include Cys34, Cys45, Cys48, and Cys67. One can recognise a 4Fe-4S His(Cys)3-ligated-type domain in the interval 83-122; sequence TSKKFRSNIVELLLTNHPHDCPVCEEGGNCHLQDMTVMTT. The [4Fe-4S] cluster site is built by His99, Cys103, Cys106, Cys112, Cys151, Cys154, Cys157, Cys201, Cys228, Cys231, Cys235, and Cys263. The 57-residue stretch at 221 to 277 folds into the 4Fe-4S Mo/W bis-MGD-type domain; that stretch reads MQYAPGICQNCSIGCNISIGERYGEIRRIENRYHESINHYLICDLGRFGYSHTNLKN.

It belongs to the complex I 75 kDa subunit family. As to quaternary structure, composed of 13 different subunits. Subunits NuoCD, E, F, and G constitute the peripheral sector of the complex. Requires [2Fe-2S] cluster as cofactor. The cofactor is [4Fe-4S] cluster.

The enzyme catalyses a quinone + NADH + 5 H(+)(in) = a quinol + NAD(+) + 4 H(+)(out). In terms of biological role, NDH-1 shuttles electrons from NADH, via FMN and iron-sulfur (Fe-S) centers, to quinones in the respiratory chain. Couples the redox reaction to proton translocation (for every two electrons transferred, four hydrogen ions are translocated across the cytoplasmic membrane), and thus conserves the redox energy in a proton gradient. This Buchnera aphidicola subsp. Schizaphis graminum (strain Sg) protein is NADH-quinone oxidoreductase subunit G (nuoG).